Here is a 237-residue protein sequence, read N- to C-terminus: Methylthioribulose-1-phosphate dehydratase (237 aa).

Cys98 contacts substrate. Zn(2+) contacts are provided by His116 and His118. Catalysis depends on Glu140, which acts as the Proton donor/acceptor. Zn(2+) is bound at residue His196.

Belongs to the aldolase class II family. MtnB subfamily. The cofactor is Zn(2+).

The protein localises to the cytoplasm. The enzyme catalyses 5-(methylsulfanyl)-D-ribulose 1-phosphate = 5-methylsulfanyl-2,3-dioxopentyl phosphate + H2O. It functions in the pathway amino-acid biosynthesis; L-methionine biosynthesis via salvage pathway; L-methionine from S-methyl-5-thio-alpha-D-ribose 1-phosphate: step 2/6. Catalyzes the dehydration of methylthioribulose-1-phosphate (MTRu-1-P) into 2,3-diketo-5-methylthiopentyl-1-phosphate (DK-MTP-1-P). This is Methylthioribulose-1-phosphate dehydratase from Laccaria bicolor (strain S238N-H82 / ATCC MYA-4686) (Bicoloured deceiver).